The chain runs to 1037 residues: Probable inorganic carbon transporter subunit DabA 1 (1037 aa).

Zn(2+) contacts are provided by Cys460, Asp462, His719, and Cys734.

The protein belongs to the inorganic carbon transporter (TC 9.A.2) DabA family. Forms a complex with DabB. Zn(2+) serves as cofactor.

Its subcellular location is the cell inner membrane. In terms of biological role, part of an energy-coupled inorganic carbon pump. This chain is Probable inorganic carbon transporter subunit DabA 1, found in Nitrobacter winogradskyi (strain ATCC 25391 / DSM 10237 / CIP 104748 / NCIMB 11846 / Nb-255).